Consider the following 1072-residue polypeptide: MSIGSHSFSPGGPNGIIRSQSFAGFSGLQERRSRCNSFIENTSALKKPQAKVKKMHNLGHKNSTTPKEPQPKRVEEVYRALKNGLDEYLEVHQTELDKLTAQLKDMRRNSRLGVLYDLDKQIKAVERYMRRLEFHISKVDELYEAYCIQRRLCDGASKMKQAFAMSPTSKAARESLTEINRSYKEYTENMCTIEAELENLLGEFCIKMKGLAGFARLCPGDQYEIFMRYGRQRWKLKGKIEVNGKQSWDGEEMVFLPLIVGLISIKVTEVKGLATHILVGSVTCETKDLFAARPQVVAVDINDLGTIKLNLEITWYPFDVEDLTPSTGNVSKASALQRRMSMYSQGTPETPTFKDHSFFRWLHPLQDRPRLAILDALQDTFFDKLRRSRSFSDLPSLRLSPKAGLELYSNLPDDVFENGTATTEKRPLSFTFGDLPYEDRVPPANSAEPSSAHVTSSPDIATTATQHRARAQTAAAVTPAEGKACPGVRCEPRGHGDSCQEYPPGFQKPSDTGSDRVFIEANVPVSLLQDTDEGSELKPVELDTYEGNITKQLVKRLTSAEVPGTPERLPCEGSISGESEGYKSYLDGSIEEALQGLLLALEPHKEQYKEFQDLDQEVMHLDDILKCKPAVSRSRSSSLSLTVESALESFDFLNTSDFDDEDGGGEEVCNGGGGADSVFSDTEVEKNSYRTEHPEARGHLQRSLTEDTGVGTSVAGSPLPLTTGSDSLDITIVKHLQYCTQLIQQIVFSRKTPFVTRDLLDKLSRQTLVMENIAEISTENLGSITSLTDAIPEFHKKLSLLAFWMKCTGPSGVYHTSADKMMKQLDINFAATVNEECPGLAETVFRILVSQILDRTEPVLYSTMSSEIITVFQYYNYFASHSVNDLGSYLLQLAKEASVVQMLQSVKDGKLQQNVSKINSNNLPPQQEVLRALALLLNENKNEVSETVASLLTATAENKHFREKALIYYCEALTQPNLQLQKAACLALRYLKATESIKMLVMLCQSDNEEIRKVASETLLSLGEDGRLAYEQLDNSPGNLSELEVAGELNLPQLSRRTCLSVTATEEGWSCH.

A coiled-coil region spans residues Asn-83 to Leu-112. The interval Arg-173–Arg-470 is necessary for interaction with NCAM and myoblast protrusion formation. 2 disordered regions span residues Asp-439–Thr-465 and Glu-683–Pro-718. Residues Ala-447–Ile-460 show a composition bias toward polar residues. A compositionally biased stretch (basic and acidic residues) spans Glu-683–Gly-698.

Belongs to the RIPOR family. In terms of assembly, homooligomer; homooligomerization is regulated by RHOC and leads to the formation of concatemers through the association of N- and C-termini. Interacts with NCAM; this interaction is necessary for myoblast protrusion formation. As to expression, expressed in myoblast and myotubes (at protein level). Expressed in brain, eyes and skeletal muscle.

It localises to the cytoplasm. It is found in the cytoskeleton. The protein localises to the cell projection. The protein resides in the filopodium. Its subcellular location is the apical cell membrane. It localises to the stereocilium. It is found in the stereocilium membrane. Its function is as follows. Acts as an inhibitor of the small GTPase RHOA and plays several roles in the regulation of myoblast and hair cell differentiation, lymphocyte T proliferation and neutrophil polarization. Plays a role in fetal mononuclear myoblast differentiation by promoting filopodia and myotube formation. Maintains naive T lymphocytes in a quiescent state and prevents chemokine-induced T lymphocyte responses, such as cell adhesion, polarization and migration. Involved also in the regulation of neutrophil polarization, chemotaxis and adhesion. Required for normal development of inner and outer hair cell stereocilia within the cochlea of the inner ear. Plays a role for maintaining the structural organization of the basal domain of stereocilia. Involved in mechanosensory hair cell function. Required for normal hearing. The chain is Rho family-interacting cell polarization regulator 2 from Coturnix japonica (Japanese quail).